The sequence spans 49 residues: Defensin Tk-AMP-D1 (49 aa).

4 disulfide bridges follow: Cys3–Cys49, Cys14–Cys34, Cys20–Cys43, and Cys24–Cys45.

Has weak antifungal activity against F.graminearum and F.verticillioides below 30 ug/ml, but not against A.consortiale B.cinerea, H.sativum, F.culmorum, C.graminicola and D.maydis. The chain is Defensin Tk-AMP-D1 from Triticum kiharae (Wheat).